The sequence spans 268 residues: Tryptophan synthase alpha chain (268 aa).

Active-site proton acceptor residues include E49 and D60.

Belongs to the TrpA family. Tetramer of two alpha and two beta chains.

The enzyme catalyses (1S,2R)-1-C-(indol-3-yl)glycerol 3-phosphate + L-serine = D-glyceraldehyde 3-phosphate + L-tryptophan + H2O. Its pathway is amino-acid biosynthesis; L-tryptophan biosynthesis; L-tryptophan from chorismate: step 5/5. Its function is as follows. The alpha subunit is responsible for the aldol cleavage of indoleglycerol phosphate to indole and glyceraldehyde 3-phosphate. This chain is Tryptophan synthase alpha chain, found in Escherichia coli O157:H7.